The primary structure comprises 199 residues: Probable nicotinate-nucleotide adenylyltransferase (199 aa).

Belongs to the NadD family.

It catalyses the reaction nicotinate beta-D-ribonucleotide + ATP + H(+) = deamido-NAD(+) + diphosphate. It functions in the pathway cofactor biosynthesis; NAD(+) biosynthesis; deamido-NAD(+) from nicotinate D-ribonucleotide: step 1/1. Catalyzes the reversible adenylation of nicotinate mononucleotide (NaMN) to nicotinic acid adenine dinucleotide (NaAD). In Leptospira interrogans serogroup Icterohaemorrhagiae serovar copenhageni (strain Fiocruz L1-130), this protein is Probable nicotinate-nucleotide adenylyltransferase.